A 377-amino-acid polypeptide reads, in one-letter code: Putative glutamate--cysteine ligase 2 (377 aa).

The protein belongs to the glutamate--cysteine ligase type 2 family. YbdK subfamily.

The enzyme catalyses L-cysteine + L-glutamate + ATP = gamma-L-glutamyl-L-cysteine + ADP + phosphate + H(+). In terms of biological role, ATP-dependent carboxylate-amine ligase which exhibits weak glutamate--cysteine ligase activity. The protein is Putative glutamate--cysteine ligase 2 of Pseudomonas aeruginosa (strain ATCC 15692 / DSM 22644 / CIP 104116 / JCM 14847 / LMG 12228 / 1C / PRS 101 / PAO1).